The sequence spans 103 residues: Large ribosomal subunit protein bL28 (103 aa).

Belongs to the bacterial ribosomal protein bL28 family.

The polypeptide is Large ribosomal subunit protein bL28 (Anaplasma marginale (strain St. Maries)).